A 78-amino-acid chain; its full sequence is Acyl carrier protein (78 aa).

One can recognise a Carrier domain in the interval 2-77 (SDIEQRVKQA…SAIDYVTKKL (76 aa)). Ser-37 is subject to O-(pantetheine 4'-phosphoryl)serine.

This sequence belongs to the acyl carrier protein (ACP) family. 4'-phosphopantetheine is transferred from CoA to a specific serine of apo-ACP by AcpS. This modification is essential for activity because fatty acids are bound in thioester linkage to the sulfhydryl of the prosthetic group.

Its subcellular location is the cytoplasm. Its pathway is lipid metabolism; fatty acid biosynthesis. In terms of biological role, carrier of the growing fatty acid chain in fatty acid biosynthesis. In Acinetobacter baylyi (strain ATCC 33305 / BD413 / ADP1), this protein is Acyl carrier protein.